The sequence spans 397 residues: Acetate kinase (397 aa).

Asparagine 8 is a Mg(2+) binding site. Lysine 15 contacts ATP. Arginine 89 provides a ligand contact to substrate. Aspartate 146 (proton donor/acceptor) is an active-site residue. ATP-binding positions include 206–210 (HLGNG), 281–283 (DLR), and 329–333 (GIGEN). Position 382 (glutamate 382) interacts with Mg(2+).

Belongs to the acetokinase family. Homodimer. The cofactor is Mg(2+). It depends on Mn(2+) as a cofactor.

The protein resides in the cytoplasm. It catalyses the reaction acetate + ATP = acetyl phosphate + ADP. Its pathway is metabolic intermediate biosynthesis; acetyl-CoA biosynthesis; acetyl-CoA from acetate: step 1/2. Catalyzes the formation of acetyl phosphate from acetate and ATP. Can also catalyze the reverse reaction. The polypeptide is Acetate kinase (Geobacillus sp. (strain WCH70)).